The following is a 569-amino-acid chain: Dicarboxylate transporter 1, chloroplastic (569 aa).

Residues 1-93 (MASMALSLTS…VPSPAPVSAP (93 aa)) constitute a chloroplast transit peptide. Residues 23-74 (SLKPLSKSQPSISLPSLRSNASKSPSLSHKHFLSPPSLLLPHKLKPISASSP) show a composition bias toward low complexity. Positions 23-93 (SLKPLSKSQP…VPSPAPVSAP (71 aa)) are disordered. Over residues 75 to 90 (TNPPPPPAPVPSPAPV) the composition is skewed to pro residues. A run of 12 helical transmembrane segments spans residues 106 to 126 (PLLA…PEGV), 134 to 154 (LAIF…LGAV), 172 to 192 (AAFS…FFFA), 241 to 261 (AGGI…SNVG), 268 to 288 (LGAW…SMFL), 317 to 337 (AAFV…YVVY), 367 to 387 (IMAV…KLGV), 388 to 408 (DAVT…VVTW), 423 to 443 (WFAA…ITWF), 450 to 470 (VVGG…LLYF), 490 to 510 (FLSV…VLSF), and 543 to 563 (YGFL…GLWW).

It belongs to the SLC13A/DASS transporter (TC 2.A.47) family. DIT1 subfamily. As to quaternary structure, monomer. The N-terminus is blocked. Expressed in leaves.

The protein resides in the plastid. It localises to the chloroplast inner membrane. 2-oxoglutarate/malate translocator that transports carbon skeletons into chloroplasts for net glutamate synthesis. This translocator exchanges malate for internal succinate, fumarate and 2-oxoglutarate but not for aspartate and glutamate. Involved with DIT2 in primary ammonia assimilation and in the re-assimilation of ammonia generated by the photorespiratory pathway. Imports 2-oxoglutarate into plastids as precursor for ammonia assimilation. 2-oxoglutarate is converted to glutamate, the end product of ammonia assimilation, which is exported to the cytosol by DIT2. The polypeptide is Dicarboxylate transporter 1, chloroplastic (DIT1) (Spinacia oleracea (Spinach)).